We begin with the raw amino-acid sequence, 202 residues long: Myosin regulatory light chain 10 (202 aa).

The disordered stretch occupies residues 1–21 (MGQSSLDHGVQGPVAGTGDFG). EF-hand domains lie at 60–95 (SQIQ…LGRI), 130–165 (DPEE…QADR), and 166–201 (FSEE…GEEK). The Ca(2+) site is built by Asp73, Asn75, Asp77, and Asp84.

Myosin is a hexamer of 2 heavy chains and 4 light chains. Specifically expressed in precursor B- and T-lymphocytes.

The chain is Myosin regulatory light chain 10 (Myl10) from Mus musculus (Mouse).